The following is a 549-amino-acid chain: Oxygen-dependent choline dehydrogenase (549 aa).

4-33 provides a ligand contact to FAD; that stretch reads DFVIIGSGSAGSALAYRLSEDGRNSVIVLE. His465 functions as the Proton acceptor in the catalytic mechanism.

This sequence belongs to the GMC oxidoreductase family. FAD serves as cofactor.

Its subcellular location is the cell membrane. The catalysed reaction is choline + A = betaine aldehyde + AH2. It catalyses the reaction betaine aldehyde + NAD(+) + H2O = glycine betaine + NADH + 2 H(+). The protein operates within amine and polyamine biosynthesis; betaine biosynthesis via choline pathway; betaine aldehyde from choline (cytochrome c reductase route): step 1/1. Involved in the biosynthesis of the osmoprotectant glycine betaine. Catalyzes the oxidation of choline to betaine aldehyde and betaine aldehyde to glycine betaine at the same rate. This is Oxygen-dependent choline dehydrogenase from Rhizobium meliloti (strain 1021) (Ensifer meliloti).